The following is a 322-amino-acid chain: 2-oxoglutarate-dependent dioxygenase caaD (322 aa).

Residues Thr172–Asp279 enclose the Fe2OG dioxygenase domain. Fe cation is bound by residues His200, Asp202, and His259. Arg269 is a binding site for 2-oxoglutarate.

Belongs to the iron/ascorbate-dependent oxidoreductase family. Fe(2+) serves as cofactor.

The protein operates within secondary metabolite biosynthesis. 2-oxoglutarate-dependent dioxygenase; part of the gene cluster that produces the acyltetronic acid derivatives carlosic acid, agglomerin F and carlosic acid methyl ether. CaaD catalyzes the sequential oxidations of the terminal C-10 methyl group of the caaC product to form carboxylic acid which is necessary for the biosynthesis of agglomerin F. In Aspergillus niger (strain ATCC MYA-4892 / CBS 513.88 / FGSC A1513), this protein is 2-oxoglutarate-dependent dioxygenase caaD.